Consider the following 157-residue polypeptide: Heat shock 22 kDa protein, chloroplastic (157 aa).

The 116-residue stretch at 40–155 (GKAGHTHAPM…KPEPKRIAVT (116 aa)) folds into the sHSP domain.

The protein belongs to the small heat shock protein (HSP20) family.

The protein localises to the plastid. Its subcellular location is the chloroplast. In Chlamydomonas reinhardtii (Chlamydomonas smithii), this protein is Heat shock 22 kDa protein, chloroplastic.